The primary structure comprises 363 residues: Chorismate synthase (363 aa).

The disordered stretch occupies residues 44 to 63 (DLDRRKPGTSRHTTQRQEPD). NADP(+) is bound by residues Arg-48 and Arg-54. FMN-binding positions include 125-127 (RSS), 237-238 (NA), Gly-277, 292-296 (KPTSS), and Arg-318.

The protein belongs to the chorismate synthase family. Homotetramer. Requires FMNH2 as cofactor.

It carries out the reaction 5-O-(1-carboxyvinyl)-3-phosphoshikimate = chorismate + phosphate. The protein operates within metabolic intermediate biosynthesis; chorismate biosynthesis; chorismate from D-erythrose 4-phosphate and phosphoenolpyruvate: step 7/7. Its function is as follows. Catalyzes the anti-1,4-elimination of the C-3 phosphate and the C-6 proR hydrogen from 5-enolpyruvylshikimate-3-phosphate (EPSP) to yield chorismate, which is the branch point compound that serves as the starting substrate for the three terminal pathways of aromatic amino acid biosynthesis. This reaction introduces a second double bond into the aromatic ring system. This Pseudomonas fluorescens (strain ATCC BAA-477 / NRRL B-23932 / Pf-5) protein is Chorismate synthase.